We begin with the raw amino-acid sequence, 299 residues long: UDP-N-acetylenolpyruvoylglucosamine reductase (299 aa).

Residues 27 to 192 (KSGGAADWLF…VGATFRGRPG (166 aa)) enclose the FAD-binding PCMH-type domain. The active site involves R172. Positions 206–225 (ASREASQPLRSRTGGSTFKN) are disordered. Positions 208–224 (REASQPLRSRTGGSTFK) are enriched in polar residues. The active-site Proton donor is S221. Residue E291 is part of the active site.

The protein belongs to the MurB family. The cofactor is FAD.

The protein localises to the cytoplasm. The enzyme catalyses UDP-N-acetyl-alpha-D-muramate + NADP(+) = UDP-N-acetyl-3-O-(1-carboxyvinyl)-alpha-D-glucosamine + NADPH + H(+). Its pathway is cell wall biogenesis; peptidoglycan biosynthesis. In terms of biological role, cell wall formation. The protein is UDP-N-acetylenolpyruvoylglucosamine reductase of Sphingopyxis alaskensis (strain DSM 13593 / LMG 18877 / RB2256) (Sphingomonas alaskensis).